Consider the following 246-residue polypeptide: MyoD family inhibitor domain-containing protein (246 aa).

Disordered regions lie at residues 1–93 (MSQE…EEET) and 134–164 (KIQS…ASPE). The Extracellular segment spans residues 1 to 170 (MSQEREPFSP…ASPEDGCVHC (170 aa)). Polar residues predominate over residues 63–87 (EDNSNSQPIKAQPQRLPQPNTSALE). The region spanning 74-246 (QPQRLPQPNT…MECCGICFPS (173 aa)) is the MDFI domain. A helical membrane pass occupies residues 171 to 188 (ILTCLFCEFLTLCNIVVG). The Cytoplasmic segment spans residues 189–246 (QASCGICTSEACCCCCTEEMGDDCNCPCDMDCGIMDACCESSDCLEICMECCGICFPS).

This sequence belongs to the MDFI family. Expressed broadly at a low level in the early embryo.

It localises to the cytoplasm. The protein localises to the cell membrane. Its subcellular location is the secreted. Its function is as follows. Required to control the activity of various transcription factors through their sequestration in the cytoplasm. Retains nuclear Zic proteins in the cytoplasm and inhibits their transcriptional activation. Required for dorsoanterior development. Necessary for siamois to activate downstream target genes, including gsc, during execution of the dorsal organizer program. Also regulates the transcriptional activity of TCF7L1/TCF3 by interacting directly with TCF7L1/TCF3 and preventing it from binding DNA. Involved in the development of lymphatic vessel valves. It is required to promote lymphatic endothelial cell migration, in a process that involves down-regulation of integrin beta 1 activation and control of cell adhesion to the extracellular matrix. This is MyoD family inhibitor domain-containing protein from Xenopus laevis (African clawed frog).